Here is a 100-residue protein sequence, read N- to C-terminus: Large ribosomal subunit protein bL27 (100 aa).

Residues 1–9 (MLKMNLQLF) constitute a propeptide that is removed on maturation.

This sequence belongs to the bacterial ribosomal protein bL27 family. The N-terminus is cleaved by ribosomal processing cysteine protease Prp.

This is Large ribosomal subunit protein bL27 from Clostridium perfringens (strain ATCC 13124 / DSM 756 / JCM 1290 / NCIMB 6125 / NCTC 8237 / Type A).